We begin with the raw amino-acid sequence, 257 residues long: 4-hydroxy-tetrahydrodipicolinate reductase (257 aa).

Residues 8–13 (GSTGRV), 90–92 (ATT), and 114–117 (ATNM) each bind NAD(+). The active-site Proton donor/acceptor is the H146. (S)-2,3,4,5-tetrahydrodipicolinate is bound at residue H147. K150 acts as the Proton donor in catalysis. 156-157 (GT) provides a ligand contact to (S)-2,3,4,5-tetrahydrodipicolinate.

The protein belongs to the DapB family.

Its subcellular location is the cytoplasm. The enzyme catalyses (S)-2,3,4,5-tetrahydrodipicolinate + NAD(+) + H2O = (2S,4S)-4-hydroxy-2,3,4,5-tetrahydrodipicolinate + NADH + H(+). It carries out the reaction (S)-2,3,4,5-tetrahydrodipicolinate + NADP(+) + H2O = (2S,4S)-4-hydroxy-2,3,4,5-tetrahydrodipicolinate + NADPH + H(+). Its pathway is amino-acid biosynthesis; L-lysine biosynthesis via DAP pathway; (S)-tetrahydrodipicolinate from L-aspartate: step 4/4. In terms of biological role, catalyzes the conversion of 4-hydroxy-tetrahydrodipicolinate (HTPA) to tetrahydrodipicolinate. This is 4-hydroxy-tetrahydrodipicolinate reductase from Aliarcobacter butzleri (strain RM4018) (Arcobacter butzleri).